A 295-amino-acid polypeptide reads, in one-letter code: Probable peptidyl-prolyl cis-trans isomerase B (295 aa).

2 disordered regions span residues 105–128 (SADKAAKPVKPPRAGKVPTDPATV) and 274–295 (IASGGDDGPPATEVTIESLRLD). In terms of domain architecture, PPIase cyclophilin-type spans 126 to 294 (ATVSASMATN…TEVTIESLRL (169 aa)).

Belongs to the cyclophilin-type PPIase family.

It carries out the reaction [protein]-peptidylproline (omega=180) = [protein]-peptidylproline (omega=0). PPIases accelerate the folding of proteins. It catalyzes the cis-trans isomerization of proline imidic peptide bonds in oligopeptides. This chain is Probable peptidyl-prolyl cis-trans isomerase B (ppiB), found in Mycobacterium leprae (strain TN).